A 572-amino-acid chain; its full sequence is Laccase-3 (572 aa).

Positions 1–18 are cleaved as a signal peptide; sequence MARTTFLVSVSLFVSAVL. 2 consecutive Plastocyanin-like domains span residues 21–145 and 157–304; these read TVEY…LVIY and IDDE…LIYE. Cu cation contacts are provided by His-82, His-84, His-127, and His-129. Cys-103 and Cys-561 are disulfide-bonded. N-linked (GlcNAc...) asparagine glycosylation is found at Asn-182, Asn-228, Asn-294, Asn-367, and Asn-405. In terms of domain architecture, Plastocyanin-like 3 spans 422-540; that stretch reads DMPTLLKILT…EGFAMVFAEA (119 aa). Residues His-470, His-473, His-475, His-522, Cys-523, His-524, and His-528 each coordinate Cu cation.

It belongs to the multicopper oxidase family. Homodimer. Cu cation serves as cofactor. As to expression, in mycelia, at a lower level than LCC4.

The protein resides in the secreted. The enzyme catalyses 4 hydroquinone + O2 = 4 benzosemiquinone + 2 H2O. In terms of biological role, lignin degradation and detoxification of lignin-derived products. The chain is Laccase-3 (LCC3) from Thanatephorus cucumeris (Black scurf of potato).